Here is an 84-residue protein sequence, read N- to C-terminus: NAD(P)H-quinone oxidoreductase subunit O (84 aa).

The protein belongs to the complex I NdhO subunit family. As to quaternary structure, NDH-1 can be composed of about 15 different subunits; different subcomplexes with different compositions have been identified which probably have different functions.

It is found in the cellular thylakoid membrane. The catalysed reaction is a plastoquinone + NADH + (n+1) H(+)(in) = a plastoquinol + NAD(+) + n H(+)(out). It catalyses the reaction a plastoquinone + NADPH + (n+1) H(+)(in) = a plastoquinol + NADP(+) + n H(+)(out). Functionally, NDH-1 shuttles electrons from an unknown electron donor, via FMN and iron-sulfur (Fe-S) centers, to quinones in the respiratory and/or the photosynthetic chain. The immediate electron acceptor for the enzyme in this species is believed to be plastoquinone. Couples the redox reaction to proton translocation, and thus conserves the redox energy in a proton gradient. Cyanobacterial NDH-1 also plays a role in inorganic carbon-concentration. This is NAD(P)H-quinone oxidoreductase subunit O from Synechococcus sp. (strain CC9605).